We begin with the raw amino-acid sequence, 668 residues long: NADH-ubiquinone oxidoreductase chain 5 (668 aa).

18 helical membrane-spanning segments follow: residues 1–21 (MYII…LFGH), 31–51 (IAVG…YEIL), 81–101 (LTSI…LYSM), 111–131 (TRFF…VTAD), 133–153 (FVQL…LINF), 178–198 (LFFG…SVIF), 211–231 (LLGY…IGVV), 251–271 (TPVS…FLVL), 283–303 (ILNI…TIGI), 311–331 (VIAY…GLLN), 339–359 (LTTH…VIHG), 375–395 (LMPL…GFPF), 421–441 (AIIG…LLIL), 462–482 (TNMV…GYLT), 519–539 (LLPL…YFNL), 566–586 (FDFL…YDVM), 629–649 (IVQA…IGFL), and 650–668 (YVEL…PKIK).

It belongs to the complex I subunit 5 family.

The protein resides in the mitochondrion inner membrane. The catalysed reaction is a ubiquinone + NADH + 5 H(+)(in) = a ubiquinol + NAD(+) + 4 H(+)(out). In terms of biological role, core subunit of the mitochondrial membrane respiratory chain NADH dehydrogenase (Complex I) that is believed to belong to the minimal assembly required for catalysis. Complex I functions in the transfer of electrons from NADH to the respiratory chain. The immediate electron acceptor for the enzyme is believed to be ubiquinone. The protein is NADH-ubiquinone oxidoreductase chain 5 (nad5) of Dictyostelium citrinum (Slime mold).